The chain runs to 412 residues: Circumsporozoite protein (412 aa).

Positions 1–18 (MMRKLAILSVSSFLFVEA) are cleaved as a signal peptide. The segment at 69–328 (SRSLGENDDG…KNNNNEEPSD (260 aa)) is disordered. Over residues 85-105 (NGREGKDEDKRDGNNEDNEKL) the composition is skewed to basic and acidic residues. The interval 104–111 (KLRKPKHK) is required for the binding to heparan sulfate proteoglycans (HSPGs) on the surface of host hepatocytes. Positions 112–116 (KLKQP) are region I; contains the proteolytic cleavage site. A compositionally biased stretch (low complexity) spans 120–288 (NPDPNANPNV…PNANPNANPN (169 aa)). Repeat copies occupy residues 123–126 (PNAN), 127–130 (PNVD), 131–134 (PNAN), 135–138 (PNVD), 139–142 (PNAN), 143–146 (PNVD), 147–150 (PNAN), 151–154 (PNAN), 155–158 (PNAN), 159–162 (PNAN), 163–166 (PNAN), 167–170 (PNAN), 171–174 (PNAN), 175–178 (PNAN), 179–182 (PNAN), 183–186 (PNAN), 187–190 (PNAN), 191–194 (PNAN), 195–198 (PNAN), 199–202 (PNAN), 203–206 (PNAN), 207–210 (PNVD), 211–214 (PNAN), 215–218 (PNAN), 219–222 (PNAN), 223–226 (PNAN), 227–230 (PNAN), 231–234 (PNAN), 235–238 (PNAN), 239–242 (PNAN), 243–246 (PNAN), 247–250 (PNAN), 251–254 (PNAN), 255–258 (PNAN), 259–262 (PNAN), 263–266 (PNAN), 267–270 (PNAN), 271–274 (PNAN), 275–278 (PNAN), 279–282 (PNAN), and 283–286 (PNAN). The tract at residues 123–286 (PNANPNVDPN…ANPNANPNAN (164 aa)) is 41 X 4 AA tandem repeats of P-N-[AV]-[ND]. A compositionally biased stretch (polar residues) spans 289–304 (KNNQGNGQGHNMPNDP). The segment covering 310–324 (ENANANNAVKNNNNE) has biased composition (low complexity). Residues 337-390 (KIKNSISTEWSPCSVTCGNGIQVRIKPGSANKPKDELDYENDIEKKICKMEKCS) form the TSP type-1 domain. Cystine bridges form between cysteine 349-cysteine 384 and cysteine 353-cysteine 389. O-linked (Fuc) threonine glycosylation occurs at threonine 352. Cysteine 389 carries GPI-anchor amidated cysteine lipidation. The propeptide at 390–412 (SSVFNVVNSSIGLIMVLSFLFLN) is removed in mature form.

It belongs to the plasmodium circumsporozoite protein family. During host cell invasion, proteolytically cleaved at the cell membrane in the region I by a papain-like cysteine protease of parasite origin. Cleavage is triggered by the sporozoite contact with highly sulfated heparan sulfate proteoglycans (HSPGs) present on the host hepatocyte cell surface. Cleavage exposes the TSP type-1 (TSR) domain and is required for productive invasion of host hepatocytes but not for adhesion to the host cell membrane. Cleavage is dispensable for sporozoite development in the oocyst, motility and for traversal of host and vector cells. In terms of processing, O-glycosylated; maybe by POFUT2.

It is found in the cell membrane. Its subcellular location is the cytoplasm. Functionally, essential sporozoite protein. In the mosquito vector, required for sporozoite development in the oocyst, migration through the vector hemolymph and entry into the vector salivary glands. In the vertebrate host, required for sporozoite migration through the host dermis and infection of host hepatocytes. Binds to highly sulfated heparan sulfate proteoglycans (HSPGs) on the surface of host hepatocytes. Its function is as follows. In the vertebrate host, binds to highly sulfated heparan sulfate proteoglycans (HSPGs) on the surface of host hepatocytes and is required for sporozoite invasion of the host hepatocytes. This chain is Circumsporozoite protein, found in Plasmodium falciparum.